The chain runs to 455 residues: MSFVPGQENAGSRSSSVNRAGNGILKKTTWADQTERGPNNQNRGRRNQPKQTATTQPNSGSVVPHYSWFSGITQFQKGKEFQFAQGQGVPIANGIPASEQKGYWYRHNRRSFKTPDGQQKQLLPRWYFYYLGTGPHAGAEYGDDIDGVVWVASQQADTKTTADIVERDPSSHEAIPTRFAPGTVLPQGFYVEGSGRSAPASRSGSRSQSRGPNNRARSSSNQRQPASTVKPDMAEEIAALVLAKLGKDAGQPKQVTKQSAKEVRQKILNKPRQKRTPNKQCPVQQCFGKRGPNQNFGGSEMLKLGTSDPQFPILAELAPTPSAFFFGSKLELVKKNSGGADDPTKDVYELQYSGAIRFDSTLPGFETIMKVLNENLDAYQDQAGGADVVSPKPQRKRGTKQKALKGEVDNVSVAKPKSSVQRNVSRELTPEDRSLLAQILDDGVVPDGLEDDSNV.

Residues 1–62 (MSFVPGQENA…ATTQPNSGSV (62 aa)) are disordered. 2 stretches are compositionally biased toward polar residues: residues 9–19 (NAGSRSSSVNR) and 50–61 (KQTATTQPNSGS). The tract at residues 56-197 (QPNSGSVVPH…GFYVEGSGRS (142 aa)) is RNA-binding. A CoV N NTD domain is found at 64–193 (PHYSWFSGIT…VLPQGFYVEG (130 aa)). Positions 109, 125, and 167 each coordinate RNA. Disordered regions lie at residues 159-230 (KTTA…STVK), 271-292 (PRQK…KRGP), and 384-428 (GGAD…SREL). Position 170 is a phosphoserine; by host (S170). At T177 the chain carries Phosphothreonine; by host. Positions 193–212 (GSGRSAPASRSGSRSQSRGP) are enriched in low complexity. S194 is modified (phosphoserine; by host). A compositionally biased stretch (polar residues) spans 215–227 (RARSSSNQRQPAS). The CoV N CTD domain occupies 260 to 383 (AKEVRQKILN…ENLDAYQDQA (124 aa)). The tract at residues 267 to 384 (ILNKPRQKRT…NLDAYQDQAG (118 aa)) is dimerization. The residue at position 390 (S390) is a Phosphoserine; by host. Residues 393-403 (PQRKRGTKQKA) are compositionally biased toward basic residues. S425 is modified (phosphoserine; by host). At T429 the chain carries Phosphothreonine; by host.

This sequence belongs to the betacoronavirus nucleocapsid protein family. In terms of assembly, homooligomer. Both monomeric and oligomeric forms interact with RNA. Interacts with protein M. Interacts with NSP3; this interaction serves to tether the genome to the newly translated replicase-transcriptase complex at a very early stage of infection. ADP-ribosylated. The ADP-ribosylation is retained in the virion during infection. In terms of processing, phosphorylated on serine and threonine residues.

Its subcellular location is the virion. It is found in the host endoplasmic reticulum-Golgi intermediate compartment. It localises to the host Golgi apparatus. Packages the positive strand viral genome RNA into a helical ribonucleocapsid (RNP) and plays a fundamental role during virion assembly through its interactions with the viral genome and membrane protein M. Plays an important role in enhancing the efficiency of subgenomic viral RNA transcription as well as viral replication. This is Nucleoprotein from Murine coronavirus (strain 1) (MHV-1).